The following is a 456-amino-acid chain: Methionine aminopeptidase 2 (456 aa).

The segment covering 1-11 has biased composition (pro residues); it reads MTIPVPKPAHP. The segment at 1–127 is disordered; the sequence is MTIPVPKPAH…SYRTTSSEKR (127 aa). Acidic residues predominate over residues 31-45; sequence EADEEEDDDDEEGKE. Residues 66–79 are compositionally biased toward basic residues; it reads KKKKKKKKKPKKKK. Residue His209 participates in substrate binding. Residues Asp229, Asp240, and His309 each contribute to the a divalent metal cation site. His317 serves as a coordination point for substrate. A divalent metal cation is bound by residues Glu343 and Glu437.

Belongs to the peptidase M24A family. Methionine aminopeptidase eukaryotic type 2 subfamily. It depends on Co(2+) as a cofactor. Requires Zn(2+) as cofactor. The cofactor is Mn(2+). Fe(2+) serves as cofactor.

The protein resides in the cytoplasm. It carries out the reaction Release of N-terminal amino acids, preferentially methionine, from peptides and arylamides.. Functionally, cotranslationally removes the N-terminal methionine from nascent proteins. The N-terminal methionine is often cleaved when the second residue in the primary sequence is small and uncharged (Met-Ala-, Cys, Gly, Pro, Ser, Thr, or Val). The sequence is that of Methionine aminopeptidase 2 from Puccinia graminis f. sp. tritici (strain CRL 75-36-700-3 / race SCCL) (Black stem rust fungus).